The primary structure comprises 604 residues: MIRQCLSRRGAYSRYRLAARGVELAEPFHHQSSRPQGRRNWSSSPRCSLDIRTDTPRSRSEYVPLRKQLKEEAKAKRAAKRKGSAPPAKHDDWELTVGIEIHAQLDTDAKLFSRASAAIDDIPNSNVALFDIALPGSQPLFQPSTLIPALRAALAMNCDIQRVSRFDRKHYFYQDQPAGYQITQYYEPYAKNGSIWLQEHDGIAREDGEGVQIGIKQIQMEQDTAKSQELPSSTYLLDFNRVSRPLIEIITLPQIHSPATAAACVRKIQAILQSVGAVTTGMEMGGLRADVNVSVRKRSEGAGDHEYHGIVGLGQRTEIKNLSSFKAVEDAIIAERDRQIAVLEAGGTIEGETRGWTLGSTETRKLRGKEGEVDYRYMPDPDLGPVVIGEDVICDLQMKMPLLPDALFQMLVRNPKYKLSTADAKTMIELDDGQRLEYYQDVVDILIGLQTDLSADFSGGKAVGNWVLHELGGLLTKSSLPWDSGRVPAQSLAEIIDLLSRKEITSSSAKSLLAMVFDGDKRSVAQIVEDENLRFQSLSRGEYIALAEEVMRQNPKMVSEIREKGQLGKIGWFVGQIKRIGDANRVEAQKAEEILRELILKKNS.

Residues 1 to 48 (MIRQCLSRRGAYSRYRLAARGVELAEPFHHQSSRPQGRRNWSSSPRCS) constitute a mitochondrion transit peptide. A disordered region spans residues 28 to 57 (FHHQSSRPQGRRNWSSSPRCSLDIRTDTPR). Residues 33–46 (SRPQGRRNWSSSPR) show a composition bias toward polar residues.

Belongs to the GatB/GatE family. GatB subfamily. As to quaternary structure, subunit of the heterotrimeric GatCAB amidotransferase (AdT) complex, composed of A, B and C subunits.

It is found in the mitochondrion. The enzyme catalyses L-glutamyl-tRNA(Gln) + L-glutamine + ATP + H2O = L-glutaminyl-tRNA(Gln) + L-glutamate + ADP + phosphate + H(+). Functionally, allows the formation of correctly charged Gln-tRNA(Gln) through the transamidation of misacylated Glu-tRNA(Gln) in the mitochondria. The reaction takes place in the presence of glutamine and ATP through an activated gamma-phospho-Glu-tRNA(Gln). This Blastomyces gilchristii (strain SLH14081) (Blastomyces dermatitidis) protein is Glutamyl-tRNA(Gln) amidotransferase subunit B, mitochondrial.